Reading from the N-terminus, the 173-residue chain is Crossover junction endodeoxyribonuclease RuvC (173 aa).

Catalysis depends on residues Asp10, Glu71, and Asp143. Residues Asp10, Glu71, and Asp143 each contribute to the Mg(2+) site.

This sequence belongs to the RuvC family. In terms of assembly, homodimer which binds Holliday junction (HJ) DNA. The HJ becomes 2-fold symmetrical on binding to RuvC with unstacked arms; it has a different conformation from HJ DNA in complex with RuvA. In the full resolvosome a probable DNA-RuvA(4)-RuvB(12)-RuvC(2) complex forms which resolves the HJ. The cofactor is Mg(2+).

The protein resides in the cytoplasm. It carries out the reaction Endonucleolytic cleavage at a junction such as a reciprocal single-stranded crossover between two homologous DNA duplexes (Holliday junction).. Its function is as follows. The RuvA-RuvB-RuvC complex processes Holliday junction (HJ) DNA during genetic recombination and DNA repair. Endonuclease that resolves HJ intermediates. Cleaves cruciform DNA by making single-stranded nicks across the HJ at symmetrical positions within the homologous arms, yielding a 5'-phosphate and a 3'-hydroxyl group; requires a central core of homology in the junction. The consensus cleavage sequence is 5'-(A/T)TT(C/G)-3'. Cleavage occurs on the 3'-side of the TT dinucleotide at the point of strand exchange. HJ branch migration catalyzed by RuvA-RuvB allows RuvC to scan DNA until it finds its consensus sequence, where it cleaves and resolves the cruciform DNA. The sequence is that of Crossover junction endodeoxyribonuclease RuvC from Gloeobacter violaceus (strain ATCC 29082 / PCC 7421).